The primary structure comprises 318 residues: Aspartate carbamoyltransferase catalytic subunit (318 aa).

Positions 58 and 59 each coordinate carbamoyl phosphate. Lys86 contributes to the L-aspartate binding site. Carbamoyl phosphate is bound by residues Arg108, His141, and Gln144. L-aspartate-binding residues include Arg174 and Arg226. 2 residues coordinate carbamoyl phosphate: Gly270 and Pro271.

Belongs to the aspartate/ornithine carbamoyltransferase superfamily. ATCase family. As to quaternary structure, heterododecamer (2C3:3R2) of six catalytic PyrB chains organized as two trimers (C3), and six regulatory PyrI chains organized as three dimers (R2).

The enzyme catalyses carbamoyl phosphate + L-aspartate = N-carbamoyl-L-aspartate + phosphate + H(+). It functions in the pathway pyrimidine metabolism; UMP biosynthesis via de novo pathway; (S)-dihydroorotate from bicarbonate: step 2/3. Its function is as follows. Catalyzes the condensation of carbamoyl phosphate and aspartate to form carbamoyl aspartate and inorganic phosphate, the committed step in the de novo pyrimidine nucleotide biosynthesis pathway. This Lactobacillus acidophilus (strain ATCC 700396 / NCK56 / N2 / NCFM) protein is Aspartate carbamoyltransferase catalytic subunit.